The primary structure comprises 212 residues: Ribosomal RNA large subunit methyltransferase E (212 aa).

G57, W59, D77, D93, and D122 together coordinate S-adenosyl-L-methionine. The Proton acceptor role is filled by K162.

Belongs to the class I-like SAM-binding methyltransferase superfamily. RNA methyltransferase RlmE family.

The protein resides in the cytoplasm. It carries out the reaction uridine(2552) in 23S rRNA + S-adenosyl-L-methionine = 2'-O-methyluridine(2552) in 23S rRNA + S-adenosyl-L-homocysteine + H(+). Specifically methylates the uridine in position 2552 of 23S rRNA at the 2'-O position of the ribose in the fully assembled 50S ribosomal subunit. The chain is Ribosomal RNA large subunit methyltransferase E from Coxiella burnetii (strain RSA 493 / Nine Mile phase I).